The primary structure comprises 294 residues: Probable enoyl-CoA hydratase 2 (294 aa).

(3R)-3-hydroxydecanoyl-CoA is bound by residues 84-85 (HG), Lys-113, 190-195 (DLNPLH), Gly-213, and Phe-243. In terms of domain architecture, MaoC-like spans 165-269 (DRAPDAISKQ…INPTTILFQS (105 aa)). The Microbody targeting signal signature appears at 292–294 (GSL).

Belongs to the short-chain dehydrogenases/reductases (SDR) family.

It is found in the peroxisome. The enzyme catalyses a (3R)-3-hydroxyacyl-CoA = a (2E)-enoyl-CoA + H2O. This Dictyostelium discoideum (Social amoeba) protein is Probable enoyl-CoA hydratase 2 (mfeB).